Reading from the N-terminus, the 317-residue chain is uncharacterized protein (317 aa).

It to A.aeolicus AA11 and AA34.

This is an uncharacterized protein from Aquifex aeolicus (strain VF5).